The chain runs to 88 residues: Probable Fe(2+)-trafficking protein (88 aa).

It belongs to the Fe(2+)-trafficking protein family.

Functionally, could be a mediator in iron transactions between iron acquisition and iron-requiring processes, such as synthesis and/or repair of Fe-S clusters in biosynthetic enzymes. The sequence is that of Probable Fe(2+)-trafficking protein from Alkalilimnicola ehrlichii (strain ATCC BAA-1101 / DSM 17681 / MLHE-1).